A 256-amino-acid polypeptide reads, in one-letter code: MSEKRVEKKLIHYVKKALNDYRMINTGDRVMVCLSGGKDSYTLLSLLNSIRIEGNYKFDIFAFVLDQSQPGWDDSALRGWLDDKKISYEILTRDTYSIVKEKIPAGKTYCSLCSRLRRGIIYRYAEEQGFSKIALGHHRDDLIQTLLMSVFYNGQIRSMPPKLLSDNKRHVLIRPLAYCQERDIIKYAMEQQFPLIPCNLCGSQKNLMRQRVKRLISDLAKENPKVPSNILRALSNIKPSQLMDHELWNFRELNVD.

Residues 35–40 carry the PP-loop motif motif; it reads SGGKDS. The [4Fe-4S] cluster site is built by Cys110, Cys113, and Cys201.

This sequence belongs to the TtcA family. As to quaternary structure, homodimer. It depends on Mg(2+) as a cofactor. The cofactor is [4Fe-4S] cluster.

The protein resides in the cytoplasm. The catalysed reaction is cytidine(32) in tRNA + S-sulfanyl-L-cysteinyl-[cysteine desulfurase] + AH2 + ATP = 2-thiocytidine(32) in tRNA + L-cysteinyl-[cysteine desulfurase] + A + AMP + diphosphate + H(+). It functions in the pathway tRNA modification. In terms of biological role, catalyzes the ATP-dependent 2-thiolation of cytidine in position 32 of tRNA, to form 2-thiocytidine (s(2)C32). The sulfur atoms are provided by the cysteine/cysteine desulfurase (IscS) system. This Coxiella burnetii (strain CbuG_Q212) (Coxiella burnetii (strain Q212)) protein is tRNA-cytidine(32) 2-sulfurtransferase.